The sequence spans 1077 residues: MKLLYTDINHDMTEILVNQAAHAAEAGWRIFYIAPNSLSFEKERAVLENLPQEASFAITITRFAQLARYFTLNQPNQKESLNDIGLAMIFYRALASFEDGQLKVFGRLKQDASFISQLVDLYKELQTANLSILDLKYLHSPEKFEDLLAIFLVVSDLLREGEYDNQSKIAFFTEQVRSGQLDVDLKNTILIVDGFTRFSAEEEALIKSLSSRCQEIIIGAYASQKAYKANFTNGNIYSAGVDFLRYLATTFQTKPEFILSKWESKSGFEMISKNIEGKHDFTNSSHILDDTAKDCITIWECINQKDEVEHVARAIRQKLYQGYRYKDILVLLGDVDSYKLQLSKIFEQYDIPYYFGKAETMAAHPLVHFMDSLSRIKRYRFRAEDVLNLFKTGIYGEISQDDLDYFEAYISYADIKGPKKFFTDFVVGAKKFDLGRLNTIRQSLLAPLESFVKTKKQDGIKTLNQFMFFLTQVGLSDNLSRLVGQMSENEQEKHQEVWKTFTDILEQFQTIFGQEKLNLDEFLSLLNSGMMQAEYRMVPATVDVVTVKSYDLVEPHSNQFVYALGMTQSHFPKIAQNKSLISDIERQLINDANDTDGHFDIMTRENLKKNHFAALSLFNAAKQALVLTIPQLLNESEDQMSPYLIELRDIGVPFNHKGRQSLKEEADNIGNYKALLSRVVDLYRSAIDKEMTKEEQTFWSVAVRYLRRQLTSKGIEIPIITDSLDTVTVSSDVMTRRFPEDDPLKLSSSALTTFYNNQYKYFLQYVLGLEEQDSIHPDMRHHGTYLHRVFEILMKNQGIESFEEKLNSAINKTNQEDVFKSLYSEDAESRYSLEILEDIARATATILRQDSQMTVESEEERFELMIDNTIKINGIIDRIDRLSDGSLGVVDYKSSAQKFDIQKFYNGLSPQLVTYIDAISRDKEVEQKPPIFGAMYLHMQEPKQDLSKIKNLDDLVTKNHQALTYKGLFSEAEKEFLANGKYHLKDSLYSEAEIAILQAHNQLLYKKASETIKSGKFLINPYTEDAKTVDGDQFKSITGFEADRHMARARALYKLPAKEKRQGFLTLMQQEEENDDL.

The protein belongs to the helicase family. AddB/RexB type 2 subfamily. As to quaternary structure, heterodimer of AddA and RexB. Requires Mg(2+) as cofactor.

Functionally, the heterodimer acts as both an ATP-dependent DNA helicase and an ATP-dependent, dual-direction single-stranded exonuclease. Recognizes the chi site generating a DNA molecule suitable for the initiation of homologous recombination. This subunit has 5' -&gt; 3' nuclease activity but not helicase activity. In Streptococcus agalactiae serotype III (strain NEM316), this protein is ATP-dependent helicase/deoxyribonuclease subunit B.